Consider the following 207-residue polypeptide: Dephospho-CoA kinase (207 aa).

One can recognise a DPCK domain in the interval 10–207 (ILGLTGGIGS…FYLTLRGGQS (198 aa)). An ATP-binding site is contributed by 18-23 (GSGKSA).

This sequence belongs to the CoaE family.

The protein resides in the cytoplasm. The enzyme catalyses 3'-dephospho-CoA + ATP = ADP + CoA + H(+). The protein operates within cofactor biosynthesis; coenzyme A biosynthesis; CoA from (R)-pantothenate: step 5/5. Catalyzes the phosphorylation of the 3'-hydroxyl group of dephosphocoenzyme A to form coenzyme A. This is Dephospho-CoA kinase from Pseudomonas syringae pv. tomato (strain ATCC BAA-871 / DC3000).